Reading from the N-terminus, the 122-residue chain is Large ribosomal subunit protein uL18 (122 aa).

The tract at residues 1–25 is disordered; the sequence is MSQISRKQQTQKRHRRLRRHITGTS. Over residues 9–21 the composition is skewed to basic residues; the sequence is QTQKRHRRLRRHI.

It belongs to the universal ribosomal protein uL18 family. In terms of assembly, part of the 50S ribosomal subunit; part of the 5S rRNA/L5/L18/L25 subcomplex. Contacts the 5S and 23S rRNAs.

In terms of biological role, this is one of the proteins that bind and probably mediate the attachment of the 5S RNA into the large ribosomal subunit, where it forms part of the central protuberance. The polypeptide is Large ribosomal subunit protein uL18 (Synechococcus sp. (strain CC9605)).